A 189-amino-acid chain; its full sequence is Small ribosomal subunit protein uS5 (189 aa).

Residues phenylalanine 22–valine 85 form the S5 DRBM domain.

It belongs to the universal ribosomal protein uS5 family. Part of the 30S ribosomal subunit. Contacts proteins S4 and S8.

Its function is as follows. With S4 and S12 plays an important role in translational accuracy. Located at the back of the 30S subunit body where it stabilizes the conformation of the head with respect to the body. In Sinorhizobium fredii (strain NBRC 101917 / NGR234), this protein is Small ribosomal subunit protein uS5.